The sequence spans 1173 residues: Pyruvate-flavodoxin oxidoreductase (1173 aa).

4Fe-4S ferredoxin-type domains follow at residues 681-710 and 735-766; these read NVPVWQTDKCTQCNQCAFICPHAAIRPVLI and YRLAVSPLDCSGCGNCADVCPVKGKALSMQPL. Positions 690, 693, 696, 700, 744, 747, 750, 754, 810, 813, and 838 each coordinate [4Fe-4S] cluster. Basic and acidic residues predominate over residues 922–933; the sequence is GEGTRERAEKVG. The tract at residues 922–946 is disordered; that stretch reads GEGTRERAEKVGDTSGFANAREKSR. Cys1075 serves as a coordination point for [4Fe-4S] cluster.

This sequence belongs to the pyruvate:ferredoxin/flavodoxin oxidoreductase family. [4Fe-4S] cluster is required as a cofactor.

The enzyme catalyses oxidized [flavodoxin] + pyruvate + CoA + 2 H(+) = reduced [flavodoxin] + acetyl-CoA + CO2. Oxidoreductase required for the transfer of electrons from pyruvate to flavodoxin, which reduces nitrogenase. The protein is Pyruvate-flavodoxin oxidoreductase (nifJ) of Enterobacter agglomerans (Erwinia herbicola).